A 79-amino-acid chain; its full sequence is UPF0154 protein Lm4b_01315 (79 aa).

A helical transmembrane segment spans residues 2-22; the sequence is WIYILVGIICLLAGLAGGFFI. Polar residues predominate over residues 57–66; that stretch reads KINQMMSAMN. Residues 57 to 79 form a disordered region; the sequence is KINQMMSAMNKQQEKEKPKKTKK.

The protein belongs to the UPF0154 family.

The protein resides in the cell membrane. The sequence is that of UPF0154 protein Lm4b_01315 from Listeria monocytogenes serotype 4b (strain CLIP80459).